The chain runs to 110 residues: U1-lycotoxin-Ls1ee (110 aa).

A signal peptide spans 1-20 (MKFVLLFGVLLVTLFSYSSA). Residues 21–44 (EMLDDFDQADEDELLSLIEKEEAR) constitute a propeptide that is removed on maturation. Disulfide bonds link Cys-47–Cys-62, Cys-54–Cys-71, Cys-61–Cys-89, and Cys-73–Cys-87.

Belongs to the neurotoxin 19 (CSTX) family. 03 subfamily. In terms of tissue distribution, expressed by the venom gland.

The protein localises to the secreted. In Lycosa singoriensis (Wolf spider), this protein is U1-lycotoxin-Ls1ee.